A 188-amino-acid polypeptide reads, in one-letter code: Oleosin S2-2 (188 aa).

Alanine 2 carries the N-acetylalanine modification. The tract at residues 2–51 is polar; the sequence is ATVERRVQVDPTDKRIHLQPQYEGDVGYGYGYGGRADYKSSGPSSNQIVA. 3 consecutive transmembrane segments (helical) span residues 49-69, 74-94, and 96-116; these read IVAL…AGLT, VIGL…IVPA, and ITIG…LTGL. The segment at 52 to 125 is hydrophobic; sequence LIVGVPVGGS…LSSVSWVLNY (74 aa). A disordered region spans residues 164 to 188; the sequence is DKAHEAHDTSLTTETTEPGKTRRHT. The span at 172 to 181 shows a compositional bias: polar residues; that stretch reads TSLTTETTEP.

This sequence belongs to the oleosin family.

It localises to the lipid droplet. The protein localises to the membrane. May have a structural role to stabilize the lipid body during desiccation of the seed by preventing coalescence of the oil. Probably interacts with both lipid and phospholipid moieties of lipid bodies. May also provide recognition signals for specific lipase anchorage in lipolysis during seedling growth. This is Oleosin S2-2 (S2) from Brassica napus (Rape).